The primary structure comprises 534 residues: Probable DNA polymerase epsilon subunit 2 (534 aa).

This sequence belongs to the DNA polymerase epsilon subunit B family. Consists of four subunits.

It localises to the nucleus. In terms of biological role, accessory component of the DNA polymerase epsilon complex. Participates in DNA repair and in chromosomal DNA replication. The chain is Probable DNA polymerase epsilon subunit 2 (pole-2) from Caenorhabditis elegans.